The primary structure comprises 235 residues: Small ribosomal subunit protein uS3 (235 aa).

One can recognise a KH type-2 domain in the interval 39–107 (IREFIKEECK…ELHLNIVEVR (69 aa)). Positions 213–235 (QARDRKAQELQDGPAPRGAGGRR) are disordered.

The protein belongs to the universal ribosomal protein uS3 family. As to quaternary structure, part of the 30S ribosomal subunit. Forms a tight complex with proteins S10 and S14.

Functionally, binds the lower part of the 30S subunit head. Binds mRNA in the 70S ribosome, positioning it for translation. This Ruegeria pomeroyi (strain ATCC 700808 / DSM 15171 / DSS-3) (Silicibacter pomeroyi) protein is Small ribosomal subunit protein uS3.